The primary structure comprises 344 residues: uncharacterized protein (344 aa).

Residues 1-98 (MIDFVKSRDT…NNDEIGIWNY (98 aa)) lie on the Cytoplasmic side of the membrane. A helical membrane pass occupies residues 99–119 (ISVAEMGGVLLFLSYWIWTCL). H120 is a topological domain (lumenal). A helical transmembrane segment spans residues 121–141 (FSKIIFPAQKVICLYIFLFAL). Over 142-198 (NQTLQECIEEYVFSSECIKYRQFYSVYEIIDFLRTNFYRLFVIYCALGFGITRTVPK) the chain is Cytoplasmic. The chain crosses the membrane as a helical span at residues 199-219 (YLMIKGISIVIALCSVYWISL). The Lumenal portion of the chain corresponds to 220 to 222 (YKD). A helical membrane pass occupies residues 223–243 (VYVVSEIFDMIQYEVSPAIWV). Over 244 to 273 (YSICHLLKQCTSVTTYENASKARFFRRMLN) the chain is Cytoplasmic. A helical transmembrane segment spans residues 274-294 (AFIFIFCASPMLHYLSNIIFG). Residues 295–344 (NFDYRLSVIIGDLFTFMEKIAFPCYIMFPTHNEALAYNRNVAEEAQEKMI) lie on the Lumenal side of the membrane.

This sequence belongs to the UPF0742 family.

The protein resides in the endoplasmic reticulum. Its subcellular location is the membrane. This is an uncharacterized protein from Schizosaccharomyces pombe (strain 972 / ATCC 24843) (Fission yeast).